The chain runs to 93 residues: Integration host factor subunit beta (93 aa).

Belongs to the bacterial histone-like protein family. Heterodimer of an alpha and a beta chain.

This protein is one of the two subunits of integration host factor, a specific DNA-binding protein that functions in genetic recombination as well as in transcriptional and translational control. The protein is Integration host factor subunit beta of Vibrio vulnificus (strain YJ016).